The primary structure comprises 529 residues: Bifunctional purine biosynthesis protein PurH (529 aa).

The 148-residue stretch at 1 to 148 (MQQRRPVRRA…KNHKDVAIVV (148 aa)) folds into the MGS-like domain. The residue at position 287 (Lys287) is an N6-acetyllysine.

This sequence belongs to the PurH family.

It catalyses the reaction (6R)-10-formyltetrahydrofolate + 5-amino-1-(5-phospho-beta-D-ribosyl)imidazole-4-carboxamide = 5-formamido-1-(5-phospho-D-ribosyl)imidazole-4-carboxamide + (6S)-5,6,7,8-tetrahydrofolate. The catalysed reaction is IMP + H2O = 5-formamido-1-(5-phospho-D-ribosyl)imidazole-4-carboxamide. Its pathway is purine metabolism; IMP biosynthesis via de novo pathway; 5-formamido-1-(5-phospho-D-ribosyl)imidazole-4-carboxamide from 5-amino-1-(5-phospho-D-ribosyl)imidazole-4-carboxamide (10-formyl THF route): step 1/1. The protein operates within purine metabolism; IMP biosynthesis via de novo pathway; IMP from 5-formamido-1-(5-phospho-D-ribosyl)imidazole-4-carboxamide: step 1/1. The polypeptide is Bifunctional purine biosynthesis protein PurH (Escherichia fergusonii (strain ATCC 35469 / DSM 13698 / CCUG 18766 / IAM 14443 / JCM 21226 / LMG 7866 / NBRC 102419 / NCTC 12128 / CDC 0568-73)).